The sequence spans 535 residues: Interferon lambda receptor 1 (535 aa).

Positions 1-20 (MWRADRWAPLLLFLLQSALG) are cleaved as a signal peptide. Residues 21-227 (RPRLAPPRNV…FLEAPGDKRA (207 aa)) are Extracellular-facing. In terms of domain architecture, Fibronectin type-III spans 26 to 121 (PPRNVTLFSQ…ESRYLEYLFD (96 aa)). Asn-29, Asn-36, and Asn-52 each carry an N-linked (GlcNAc...) asparagine glycan. 3 cysteine pairs are disulfide-bonded: Cys-73-Cys-81, Cys-85-Cys-149, and Cys-194-Cys-216. Asn-141 is a glycosylation site (N-linked (GlcNAc...) asparagine). Residues 228 to 248 (VLAMPSLLLLLIAAVAAGVAW) form a helical membrane-spanning segment. The Cytoplasmic portion of the chain corresponds to 249 to 535 (KIMKGNPWFQ…GRMLGDYLVR (287 aa)). 2 disordered regions span residues 301–419 (NRPA…APCG) and 478–520 (VNNP…SSVQ). Residues 321 to 336 (STEDEDEDTDYDDDGD) show a composition bias toward acidic residues. Residues 350 to 360 (EKPRVMEHSET) show a composition bias toward basic and acidic residues. A compositionally biased stretch (low complexity) spans 376-396 (GSDGSSAWDSSDRSWSSTGDS). A compositionally biased stretch (basic and acidic residues) spans 397–414 (SYKDEVGSSSCLDRKEPD). Acidic residues predominate over residues 482 to 503 (EGEEEQEDEEEEEEEEEEEDWE).

Belongs to the type II cytokine receptor family. As to quaternary structure, heterodimer with IL10RB. Ubiquitinated by FBXO45-containing E3 ligase leading to proteasomal degradation.

It is found in the membrane. In terms of biological role, the IFNLR1/IL10RB dimer is a receptor for the cytokine ligands IFNL2 and IFNL3 and mediates their antiviral activity. The ligand/receptor complex stimulate the activation of the JAK/STAT signaling pathway leading to the expression of IFN-stimulated genes (ISG), which contribute to the antiviral state. Determines the cell type specificity of the lambda interferon action. Shows a more restricted pattern of expression in the epithelial tissues thereby limiting responses to lambda interferons primarily to epithelial cells of the respiratory, gastrointestinal, and reproductive tracts. Seems not to be essential for early virus-activated host defense in vaginal infection, but plays an important role in Toll-like receptor (TLR)-induced antiviral defense. Plays a significant role in the antiviral immune defense in the intestinal epithelium. This is Interferon lambda receptor 1 (Ifnlr1) from Mus musculus (Mouse).